A 200-amino-acid chain; its full sequence is GTP cyclohydrolase-2 (200 aa).

Arg-52–Glu-56 provides a ligand contact to GTP. 3 residues coordinate Zn(2+): Cys-57, Cys-68, and Cys-70. GTP contacts are provided by residues Gln-73, Glu-94–Arg-96, and Thr-116. Asp-128 serves as the catalytic Proton acceptor. Residue Arg-130 is the Nucleophile of the active site. Residues Thr-151 and Lys-156 each coordinate GTP.

Belongs to the GTP cyclohydrolase II family. Requires Zn(2+) as cofactor.

It catalyses the reaction GTP + 4 H2O = 2,5-diamino-6-hydroxy-4-(5-phosphoribosylamino)-pyrimidine + formate + 2 phosphate + 3 H(+). It functions in the pathway cofactor biosynthesis; riboflavin biosynthesis; 5-amino-6-(D-ribitylamino)uracil from GTP: step 1/4. In terms of biological role, catalyzes the conversion of GTP to 2,5-diamino-6-ribosylamino-4(3H)-pyrimidinone 5'-phosphate (DARP), formate and pyrophosphate. The chain is GTP cyclohydrolase-2 from Psychromonas ingrahamii (strain DSM 17664 / CCUG 51855 / 37).